A 210-amino-acid chain; its full sequence is uncharacterized protein (210 aa).

The signal sequence occupies residues 1 to 21 (MLKMNVKKALVILVALALVAA).

This is an uncharacterized protein from Archaeoglobus fulgidus (strain ATCC 49558 / DSM 4304 / JCM 9628 / NBRC 100126 / VC-16).